Here is a 59-residue protein sequence, read N- to C-terminus: Conotoxin Ts-03 (59 aa).

The N-terminal stretch at 1–19 (MRCLPVFIILLLLIPSAAS) is a signal peptide. Positions 20 to 47 (VAQPKTKDDVALASFYDNAKRTLQRHWA) are excised as a propeptide.

This sequence belongs to the conotoxin T superfamily. In terms of processing, contains 2 disulfide bonds that can be either 'C1-C3, C2-C4' or 'C1-C4, C2-C3', since these disulfide connectivities have been observed for conotoxins with cysteine framework V (for examples, see AC P0DQQ7 and AC P81755). Expressed by the venom duct.

It is found in the secreted. The polypeptide is Conotoxin Ts-03 (Conus tessulatus (Tessellate cone)).